The chain runs to 305 residues: Ribosomal RNA small subunit methyltransferase H (305 aa).

S-adenosyl-L-methionine contacts are provided by residues 30-32, D49, F74, D96, and Q103; that span reads GGH.

This sequence belongs to the methyltransferase superfamily. RsmH family.

The protein resides in the cytoplasm. It carries out the reaction cytidine(1402) in 16S rRNA + S-adenosyl-L-methionine = N(4)-methylcytidine(1402) in 16S rRNA + S-adenosyl-L-homocysteine + H(+). In terms of biological role, specifically methylates the N4 position of cytidine in position 1402 (C1402) of 16S rRNA. This Francisella tularensis subsp. novicida (strain U112) protein is Ribosomal RNA small subunit methyltransferase H.